A 349-amino-acid chain; its full sequence is Heparin sulfate O-sulfotransferase (349 aa).

At 1–17 (MFRKLLKMWILLRPTHW) the chain is on the cytoplasmic side. The chain crosses the membrane as a helical; Signal-anchor for type II membrane protein span at residues 18 to 38 (LILIALCAVTCAGYWLLWSEI). The Lumenal portion of the chain corresponds to 39–349 (RLEHAFKPLS…KFMYEKIRPK (311 aa)). N-linked (GlcNAc...) asparagine glycosylation is found at Asn-107 and Asn-126. Catalysis depends on residues His-139 and His-141. 2 cysteine pairs are disulfide-bonded: Cys-200/Cys-208 and Cys-221/Cys-227. Asn-282 carries N-linked (GlcNAc...) asparagine glycosylation.

It belongs to the sulfotransferase 3 family. In terms of assembly, homotrimer.

It is found in the golgi apparatus membrane. In terms of biological role, catalyzes the transfer of sulfate to the C2-position of selected hexuronic acid residues within the maturing heparan sulfate (HS). This Drosophila melanogaster (Fruit fly) protein is Heparin sulfate O-sulfotransferase.